The primary structure comprises 481 residues: UDP-glycosyltransferase 85A2 (481 aa).

UDP-alpha-D-glucose contacts are provided by residues serine 303, cysteine 360–glutamine 362, histidine 377–glutamate 385, and phenylalanine 399–glutamine 402.

This sequence belongs to the UDP-glycosyltransferase family. As to expression, expressed in roots, shoots, leaves and flowers.

In Arabidopsis thaliana (Mouse-ear cress), this protein is UDP-glycosyltransferase 85A2 (UGT85A2).